Consider the following 200-residue polypeptide: Probable DNA-directed RNA polymerase subunit delta (200 aa).

Positions 19-88 constitute an HTH HARE-type domain; that stretch reads LSMIEVARAI…GDNKWGLRSW (70 aa). Composition is skewed to acidic residues over residues 125 to 143 and 150 to 200; these read DSDA…DAYE and YDDE…TSEE. The tract at residues 125–200 is disordered; that stretch reads DSDAIDYNAD…SDDDAETSEE (76 aa).

The protein belongs to the RpoE family. As to quaternary structure, RNAP is composed of a core of 2 alpha, a beta and a beta' subunits. The core is associated with a delta subunit and one of several sigma factors.

Its function is as follows. Participates in both the initiation and recycling phases of transcription. In the presence of the delta subunit, RNAP displays an increased specificity of transcription, a decreased affinity for nucleic acids, and an increased efficiency of RNA synthesis because of enhanced recycling. The chain is Probable DNA-directed RNA polymerase subunit delta from Streptococcus pneumoniae serotype 4 (strain ATCC BAA-334 / TIGR4).